The primary structure comprises 359 residues: tRNA pseudouridine synthase B (359 aa).

D63 serves as the catalytic Nucleophile.

It belongs to the pseudouridine synthase TruB family. Type 1 subfamily.

It catalyses the reaction uridine(55) in tRNA = pseudouridine(55) in tRNA. Responsible for synthesis of pseudouridine from uracil-55 in the psi GC loop of transfer RNAs. This chain is tRNA pseudouridine synthase B, found in Psychrobacter cryohalolentis (strain ATCC BAA-1226 / DSM 17306 / VKM B-2378 / K5).